Reading from the N-terminus, the 299-residue chain is Acetylglutamate kinase (299 aa).

Residues 70–71 (GG), R92, and N186 each bind substrate.

Belongs to the acetylglutamate kinase family. ArgB subfamily.

The protein localises to the cytoplasm. The catalysed reaction is N-acetyl-L-glutamate + ATP = N-acetyl-L-glutamyl 5-phosphate + ADP. It participates in amino-acid biosynthesis; L-arginine biosynthesis; N(2)-acetyl-L-ornithine from L-glutamate: step 2/4. Functionally, catalyzes the ATP-dependent phosphorylation of N-acetyl-L-glutamate. This is Acetylglutamate kinase from Thermoanaerobacter pseudethanolicus (strain ATCC 33223 / 39E) (Clostridium thermohydrosulfuricum).